A 153-amino-acid chain; its full sequence is Transcriptional repressor NrdR (153 aa).

A zinc finger lies at 3–34 (CPSCHHSGTRVLESRPVEEGRSIRRRRECEQC). The 91-residue stretch at 49-139 (LIVVKKEGTR…VYRQFKDINV (91 aa)) folds into the ATP-cone domain.

This sequence belongs to the NrdR family. Zn(2+) is required as a cofactor.

Its function is as follows. Negatively regulates transcription of bacterial ribonucleotide reductase nrd genes and operons by binding to NrdR-boxes. This is Transcriptional repressor NrdR from Geobacillus kaustophilus (strain HTA426).